The sequence spans 678 residues: Glutamate--cysteine ligase (678 aa).

This sequence belongs to the glutamate--cysteine ligase type 3 family.

It carries out the reaction L-cysteine + L-glutamate + ATP = gamma-L-glutamyl-L-cysteine + ADP + phosphate + H(+). Its pathway is sulfur metabolism; glutathione biosynthesis; glutathione from L-cysteine and L-glutamate: step 1/2. With respect to regulation, feedback inhibition by glutathione. Catalyzes the ATP-dependent condensation of cysteine and glutamate to form the dipeptide gamma-glutamylcysteine (gamma-GC), the first and rate-limiting step in the production of glutathione (GSH). The sequence is that of Glutamate--cysteine ligase (GSH1) from Saccharomyces cerevisiae (strain ATCC 204508 / S288c) (Baker's yeast).